The primary structure comprises 149 residues: Ribosome-binding factor A (149 aa).

The tract at residues 124-149 (AKLREGAVPAGDADPYKTSSKSESEE) is disordered.

It belongs to the RbfA family. Monomer. Binds 30S ribosomal subunits, but not 50S ribosomal subunits or 70S ribosomes.

Its subcellular location is the cytoplasm. Functionally, one of several proteins that assist in the late maturation steps of the functional core of the 30S ribosomal subunit. Associates with free 30S ribosomal subunits (but not with 30S subunits that are part of 70S ribosomes or polysomes). Required for efficient processing of 16S rRNA. May interact with the 5'-terminal helix region of 16S rRNA. This chain is Ribosome-binding factor A, found in Corynebacterium glutamicum (strain R).